The primary structure comprises 603 residues: Polypeptide N-acetylgalactosaminyltransferase 9 (603 aa).

Topologically, residues 1-6 (MAVARK) are cytoplasmic. Residues 7-29 (IRTLLTVNILVFVGIVLFSVYCR) form a helical; Signal-anchor for type II membrane protein membrane-spanning segment. Topologically, residues 30–603 (LQGRSQELVR…IRNWIKHARH (574 aa)) are lumenal. 2 cysteine pairs are disulfide-bonded: cysteine 141/cysteine 372 and cysteine 363/cysteine 442. The segment at 150–261 (LPQVSVVFIF…TGWAEPALSR (112 aa)) is catalytic subdomain A. The substrate site is built by aspartate 191 and arginine 222. Mn(2+) contacts are provided by aspartate 245, histidine 247, and histidine 377. Positions 318 to 380 (PIRTPAMIGC…PCSRVAHIER (63 aa)) are catalytic subdomain B. Positions 380 and 385 each coordinate substrate. N-linked (GlcNAc...) asparagine glycosylation occurs at asparagine 460. Residues 464-600 (TYGEVRNSKA…KWMIRNWIKH (137 aa)) form the Ricin B-type lectin domain. 3 cysteine pairs are disulfide-bonded: cysteine 477-cysteine 493, cysteine 525-cysteine 540, and cysteine 567-cysteine 587.

This sequence belongs to the glycosyltransferase 2 family. GalNAc-T subfamily. Mn(2+) serves as cofactor. As to expression, specifically expressed in brain. Not expressed in heart, placenta, lung, liver, skeletal muscle, kidney, pancreas, spleen, thymus, prostate, testis, ovary, small intestine, colon and leukocyte. In brain, it is expressed in cerebellum, frontal lobe, temporal lobe, putamen and spinal cord, weakly expressed in cerebral cortex. Not expressed in medulla and occipital pole.

It localises to the golgi apparatus membrane. The enzyme catalyses L-seryl-[protein] + UDP-N-acetyl-alpha-D-galactosamine = a 3-O-[N-acetyl-alpha-D-galactosaminyl]-L-seryl-[protein] + UDP + H(+). It carries out the reaction L-threonyl-[protein] + UDP-N-acetyl-alpha-D-galactosamine = a 3-O-[N-acetyl-alpha-D-galactosaminyl]-L-threonyl-[protein] + UDP + H(+). It participates in protein modification; protein glycosylation. Catalyzes the initial reaction in O-linked oligosaccharide biosynthesis, the transfer of an N-acetyl-D-galactosamine residue to a serine or threonine residue on the protein receptor. Does not glycosylate apomucin or SDC3. In Homo sapiens (Human), this protein is Polypeptide N-acetylgalactosaminyltransferase 9 (GALNT9).